A 676-amino-acid chain; its full sequence is Protein timeless (676 aa).

Residues 77 to 108 (VNTLQKLLNLWFEASLSESSEDNESNTSPPKK) form a necessary for normal circadian rhythm region. 2 disordered regions span residues 94–145 (ESSE…CDER) and 346–398 (PESI…LVKR). 2 stretches are compositionally biased toward low complexity: residues 101–129 (SNTSPPKKGSGDSSPMLTSDPTSDSSDNG) and 360–369 (QGKPQHQKPP). Residues 388–398 (KELRRKKLVKR) carry the Nuclear localization signal motif.

This sequence belongs to the timeless family. In terms of assembly, forms a heterodimer with period (PER); the complex then translocates into the nucleus. In terms of processing, phosphorylated with a circadian rhythmicity.

Its subcellular location is the nucleus. The protein localises to the cytoplasm. The protein resides in the perinuclear region. Required for the production of circadian rhythms. The biological cycle depends on the rhythmic formation and nuclear localization of the TIM-PER complex. Light induces the degradation of TIM, which promotes elimination of PER. Nuclear activity of the heterodimer coordinatively regulates PER and TIM transcription through a negative feedback loop. Behaves as a negative element in circadian transcriptional loop. Does not appear to bind DNA, suggesting indirect transcriptional inhibition. The polypeptide is Protein timeless (tim) (Drosophila hydei (Fruit fly)).